Here is a 483-residue protein sequence, read N- to C-terminus: Protein PLASTID TRANSCRIPTIONALLY ACTIVE 14 (483 aa).

Residues 1 to 62 constitute a chloroplast transit peptide; sequence MASSVSLQFL…TQPFPLFQSP (62 aa). The SET domain occupies 80 to 325; sequence YKIGYVRSVR…KGEEMTINYM (246 aa). Y324 is a binding site for S-adenosyl-L-methionine.

The protein belongs to the class V-like SAM-binding methyltransferase superfamily. Component of the transcriptionally active chromosome (TAC) complexes. Interacts with PTAC12/HMR/PAP5 and PTAC7. Binds to SL1/MTERF3. As to expression, mostly expressed in leaves, flowers and seedlings, and, to a lower extent, in stems and roots.

The protein localises to the plastid. The protein resides in the chloroplast thylakoid. Its function is as follows. Essential for chloroplast development, especially for thylakoid formation. Involved in plastid gene expression, probably by maintaining plastid-encoded RNA polymerase (PEP) activity. The chain is Protein PLASTID TRANSCRIPTIONALLY ACTIVE 14 from Arabidopsis thaliana (Mouse-ear cress).